Here is a 345-residue protein sequence, read N- to C-terminus: RING finger protein 228 (345 aa).

Positions 1–21 are enriched in low complexity; that stretch reads MAAPASDSGGSQQSPSSSPGS. Positions 1–43 are disordered; it reads MAAPASDSGGSQQSPSSSPGSREGAGVAAKGAPDCGDAGARDA. The RING-type zinc finger occupies 58 to 125; that stretch reads CKICYNYFDA…PGAIACPVCR (68 aa). Residues 159–213 form a disordered region; the sequence is LPQDRLPPLPARLPAPAAAPPPTPAPPPPPSPAPPQPPPPPPAEDAAPGPRARPG. A compositionally biased stretch (pro residues) spans 163–201; it reads RLPPLPARLPAPAAAPPPTPAPPPPPSPAPPQPPPPPPA. Residues 202-213 are compositionally biased toward low complexity; sequence EDAAPGPRARPG. The next 2 membrane-spanning stretches (helical) occupy residues 236-256 and 290-310; these read VCVVFSFLSMVVLLFTGLIFV and LSVASILALFSVVVTWVICWL. Residues 319–345 are disordered; it reads AGSTGGSGGGGGPRARAAAGGARRSDT. The span at 321-331 shows a compositional bias: gly residues; sequence STGGSGGGGGP. The span at 332-345 shows a compositional bias: low complexity; the sequence is RARAAAGGARRSDT.

It localises to the membrane. This Homo sapiens (Human) protein is RING finger protein 228.